The chain runs to 461 residues: UDP-glucose 6-dehydrogenase TuaD (461 aa).

NAD(+)-binding positions include 3 to 20, valine 12, aspartate 31, lysine 36, threonine 122, and glutamate 156; that span reads KIAVIGTGYVGLVSGTCF. Residues 152–156, lysine 205, asparagine 209, 250–254, and glycine 258 each bind substrate; these read EFLRE and FLKAG. The active-site Nucleophile is cysteine 261. Lysine 264 contacts NAD(+). Lysine 321 contributes to the substrate binding site. Residue arginine 328 participates in NAD(+) binding.

Belongs to the UDP-glucose/GDP-mannose dehydrogenase family. Post-translationally, phosphorylated by YwqD and dephosphorylated by YwqE in vitro.

It localises to the cytoplasm. The enzyme catalyses UDP-alpha-D-glucose + 2 NAD(+) + H2O = UDP-alpha-D-glucuronate + 2 NADH + 3 H(+). It functions in the pathway nucleotide-sugar biosynthesis; UDP-alpha-D-glucuronate biosynthesis; UDP-alpha-D-glucuronate from UDP-alpha-D-glucose: step 1/1. With respect to regulation, activated by phosphorylation; inhibited by dephosphorylation. Catalyzes the conversion of UDP-glucose into UDP-glucuronate, one of the precursors of teichuronic acid. The polypeptide is UDP-glucose 6-dehydrogenase TuaD (tuaD) (Bacillus subtilis (strain 168)).